The chain runs to 467 residues: ATP synthase subunit beta (467 aa).

150-157 contributes to the ATP binding site; it reads GGAGVGKT.

This sequence belongs to the ATPase alpha/beta chains family. F-type ATPases have 2 components, CF(1) - the catalytic core - and CF(0) - the membrane proton channel. CF(1) has five subunits: alpha(3), beta(3), gamma(1), delta(1), epsilon(1). CF(0) has three main subunits: a(1), b(2) and c(9-12). The alpha and beta chains form an alternating ring which encloses part of the gamma chain. CF(1) is attached to CF(0) by a central stalk formed by the gamma and epsilon chains, while a peripheral stalk is formed by the delta and b chains.

The protein resides in the cell inner membrane. The enzyme catalyses ATP + H2O + 4 H(+)(in) = ADP + phosphate + 5 H(+)(out). Produces ATP from ADP in the presence of a proton gradient across the membrane. The catalytic sites are hosted primarily by the beta subunits. In Vibrio parahaemolyticus serotype O3:K6 (strain RIMD 2210633), this protein is ATP synthase subunit beta.